The following is a 138-amino-acid chain: Homeobox protein HD-11 (138 aa).

A DNA-binding region (homeobox) is located at residues 30–89 (CTGKQMRKTRLQTCVLNRIFEISRFPSSKTIVDLALLINVHPKSIQKWFQNTRQAIRKKG).

It is found in the nucleus. This is Homeobox protein HD-11 (HD-11) from Encephalitozoon cuniculi (strain GB-M1) (Microsporidian parasite).